The chain runs to 187 residues: Mitochondrial import receptor subunit TOM20-4 (187 aa).

Met1 carries the N-acetylmethionine modification. The Cytoplasmic segment spans residues 1–160 (MDMQNENERL…QKKTSEFKYD (160 aa)). The TPR repeat unit spans residues 84–117 (LSFGFLSSDQTEASDNFEKASQFFQLAVEEQPES). The chain crosses the membrane as a helical span at residues 161 to 178 (VFGWVILASYVVAWISFA). The Mitochondrial intermembrane segment spans residues 179–187 (NSQTPVSRQ). The AKR2A-binding sequence (ABS) required for mitochondrion outer membrane targeting motif lies at 179–187 (NSQTPVSRQ).

The protein belongs to the Tom20 family. Forms part of the preprotein translocase complex of the outer mitochondrial membrane (TOM complex) which consists of at least 6 different proteins (TOM5, TOM6, TOM7, TOM20, TOM22/TOM9 and TOM40). Interacts with a variety of mitochondrial precursor proteins. Interacts with AKR2A. Component of a mitochondrial large protein complex that contains, at least, MIC60, DGS1, TOM40, TOM20 proteins, and petC/RISP. In terms of processing, the N-terminus is blocked. As to expression, expressed in roots, flowers, young cotyledons and leaves.

The protein localises to the mitochondrion outer membrane. Its function is as follows. Central component of the receptor complex responsible for the recognition and translocation of cytosolically synthesized mitochondrial preproteins. Together with TOM22 functions as the transit peptide receptor at the surface of the mitochondrion outer membrane and facilitates the movement of preproteins into the translocation pore. The sequence is that of Mitochondrial import receptor subunit TOM20-4 from Arabidopsis thaliana (Mouse-ear cress).